The sequence spans 222 residues: Octanoyltransferase (222 aa).

In terms of domain architecture, BPL/LPL catalytic spans 32 to 207 (RDRPDVLMLL…AFARVFGVQC (176 aa)). Substrate is bound by residues 72–79 (RGGEVTYH), 139–141 (ALG), and 152–154 (GFA). Cys170 functions as the Acyl-thioester intermediate in the catalytic mechanism.

The protein belongs to the LipB family.

The protein resides in the cytoplasm. It catalyses the reaction octanoyl-[ACP] + L-lysyl-[protein] = N(6)-octanoyl-L-lysyl-[protein] + holo-[ACP] + H(+). The protein operates within protein modification; protein lipoylation via endogenous pathway; protein N(6)-(lipoyl)lysine from octanoyl-[acyl-carrier-protein]: step 1/2. Catalyzes the transfer of endogenously produced octanoic acid from octanoyl-acyl-carrier-protein onto the lipoyl domains of lipoate-dependent enzymes. Lipoyl-ACP can also act as a substrate although octanoyl-ACP is likely to be the physiological substrate. This chain is Octanoyltransferase, found in Gloeobacter violaceus (strain ATCC 29082 / PCC 7421).